A 514-amino-acid polypeptide reads, in one-letter code: Peptide chain release factor 3 (514 aa).

In terms of domain architecture, tr-type G spans 8 to 268 (KKRRTFAIIS…TFLEFAPEPH (261 aa)). Residues 17–24 (SHPDAGKT), 85–89 (DTPGH), and 139–142 (NKLD) each bind GTP.

It belongs to the TRAFAC class translation factor GTPase superfamily. Classic translation factor GTPase family. PrfC subfamily.

It is found in the cytoplasm. In terms of biological role, increases the formation of ribosomal termination complexes and stimulates activities of RF-1 and RF-2. It binds guanine nucleotides and has strong preference for UGA stop codons. It may interact directly with the ribosome. The stimulation of RF-1 and RF-2 is significantly reduced by GTP and GDP, but not by GMP. The chain is Peptide chain release factor 3 from Streptococcus pyogenes serotype M1.